The primary structure comprises 491 residues: Chromosomal replication initiator protein DnaA (491 aa).

The domain I, interacts with DnaA modulators stretch occupies residues 1-86 (MTDELNSQFT…VEALSRRLGE (86 aa)). The segment at 86–150 (ENVELGVRIA…GADKAETPDT (65 aa)) is domain II. The segment at 151 to 367 (SLNARYTFES…GALIRVTAFA (217 aa)) is domain III, AAA+ region. Positions 195, 197, 198, and 199 each coordinate ATP. The segment at 368–491 (SLNKSPIELS…TARIRQRSRH (124 aa)) is domain IV, binds dsDNA.

Belongs to the DnaA family. As to quaternary structure, oligomerizes as a right-handed, spiral filament on DNA at oriC.

The protein localises to the cytoplasm. In terms of biological role, plays an essential role in the initiation and regulation of chromosomal replication. ATP-DnaA binds to the origin of replication (oriC) to initiate formation of the DNA replication initiation complex once per cell cycle. Binds the DnaA box (a 9 base pair repeat at the origin) and separates the double-stranded (ds)DNA. Forms a right-handed helical filament on oriC DNA; dsDNA binds to the exterior of the filament while single-stranded (ss)DNA is stabiized in the filament's interior. The ATP-DnaA-oriC complex binds and stabilizes one strand of the AT-rich DNA unwinding element (DUE), permitting loading of DNA polymerase. After initiation quickly degrades to an ADP-DnaA complex that is not apt for DNA replication. Binds acidic phospholipids. This Mycobacteroides abscessus (strain ATCC 19977 / DSM 44196 / CCUG 20993 / CIP 104536 / JCM 13569 / NCTC 13031 / TMC 1543 / L948) (Mycobacterium abscessus) protein is Chromosomal replication initiator protein DnaA.